The primary structure comprises 145 residues: Large ribosomal subunit protein uL13 (145 aa).

This sequence belongs to the universal ribosomal protein uL13 family. As to quaternary structure, part of the 50S ribosomal subunit.

Its function is as follows. This protein is one of the early assembly proteins of the 50S ribosomal subunit, although it is not seen to bind rRNA by itself. It is important during the early stages of 50S assembly. This is Large ribosomal subunit protein uL13 from Bacillus cytotoxicus (strain DSM 22905 / CIP 110041 / 391-98 / NVH 391-98).